The following is a 474-amino-acid chain: tRNA-2-methylthio-N(6)-dimethylallyladenosine synthase (474 aa).

Residues 3-120 form the MTTase N-terminal domain; that stretch reads KKLHIKTWGC…LPEMINSVRG (118 aa). Cys-12, Cys-49, Cys-83, Cys-157, Cys-161, and Cys-164 together coordinate [4Fe-4S] cluster. The Radical SAM core domain occupies 143–375; sequence RAEGPTAFVS…QERINQQAMA (233 aa). Residues 378–441 form the TRAM domain; sequence RRMLGSTQRI…PNSLRGKVVR (64 aa).

Belongs to the methylthiotransferase family. MiaB subfamily. Monomer. It depends on [4Fe-4S] cluster as a cofactor.

It is found in the cytoplasm. The catalysed reaction is N(6)-dimethylallyladenosine(37) in tRNA + (sulfur carrier)-SH + AH2 + 2 S-adenosyl-L-methionine = 2-methylsulfanyl-N(6)-dimethylallyladenosine(37) in tRNA + (sulfur carrier)-H + 5'-deoxyadenosine + L-methionine + A + S-adenosyl-L-homocysteine + 2 H(+). Its function is as follows. Catalyzes the methylthiolation of N6-(dimethylallyl)adenosine (i(6)A), leading to the formation of 2-methylthio-N6-(dimethylallyl)adenosine (ms(2)i(6)A) at position 37 in tRNAs that read codons beginning with uridine. The chain is tRNA-2-methylthio-N(6)-dimethylallyladenosine synthase from Salmonella arizonae (strain ATCC BAA-731 / CDC346-86 / RSK2980).